Here is a 210-residue protein sequence, read N- to C-terminus: Chaperone protein TorD (210 aa).

This sequence belongs to the TorD/DmsD family. TorD subfamily.

The protein localises to the cytoplasm. Its function is as follows. Involved in the biogenesis of TorA. Acts on TorA before the insertion of the molybdenum cofactor and, as a result, probably favors a conformation of the apoenzyme that is competent for acquiring the cofactor. This Salmonella agona (strain SL483) protein is Chaperone protein TorD.